The following is a 194-amino-acid chain: KMLTSRTLHGVMQNIRDIVNLKKSEFWNKGGPAWQKIAVCLVFDGIDPCDKDTLDVLATIGIYQDGVMKKDVDGKETIAHIFEYTTQLSVTANQQLIRPHDDGPSTLPPVQMMFCLKQKNSKKINSHRWLFNAFGRILNPEICILLDAGTKPGHKSLLALWEAFYNDKDLGGSCGEIHAMLGKGWKNLINPLVA.

It belongs to the chitin synthase family. Class III subfamily.

It localises to the cell membrane. It catalyses the reaction [(1-&gt;4)-N-acetyl-beta-D-glucosaminyl](n) + UDP-N-acetyl-alpha-D-glucosamine = [(1-&gt;4)-N-acetyl-beta-D-glucosaminyl](n+1) + UDP + H(+). Polymerizes chitin, a structural polymer of the cell wall and septum, by transferring the sugar moiety of UDP-GlcNAc to the non-reducing end of the growing chitin polymer. The protein is Chitin synthase 2 (CHS2) of Ajellomyces capsulatus (Darling's disease fungus).